The primary structure comprises 719 residues: MSDISVEKLTELEAAAELERLARAIAHHDELYHAKDRPEISDAAYDALKRRNEAIEAHFPALVRDDSPSRRVGAAPALAIFAPVVHARPMLSLDNAFSDEDVRDFVGSVYRFLGQLPDDSIAFTAEPKIDGLSMSIRYENGILVSGATRGDGTTGENVTANIRTIAEIPNRLPAGAPAVVEVRGEVYMAKSDFLTLNAQMEAEGKQTYVNPRNTAAGSLRQLDAKVTASRKLRFFAYAWGEMSDMPADTQLGMVEVFRQWGFPVNPLMKRFNSVDGLLAHYRAIGMERPTLDYDIDGVVYKVDRLDLQTRLGFRSRSPRWAIAHKFPAEQALTILRGIDIQVGRTGALTPVARLEPITVGGVVVTNATLHNEDYIKGIGQKGEPIREGRDIRIGDSVIVQRAGDVIPQIVDVVLEEGKKRGEPYQFPHVCPACGSHAVREEGEAVRRCTGGLICPAQAVERIRHFVSRNAFDIEGLGEKQVEFFFNAEDPALCIRSPADIFTLKKRQENSLTKLQNIEGFGATSVKKLYDAIDARREIALHRFLFGLGIRHVGEVNAKRLARAYLSYAAFKKAALEAVPPKEGDRTDKGSEAWQDMLAVEGIGSIVAEAVVDFYGEPHNREVLAALLAEVTPLDEEARVATGSPVEGKTVVFTGSLERMSRDEAKAMAERHGAKTAGSVSKKTDLVVAGPGAGSKLAKATELGIEVINEDDWFKLVGED.

NAD(+) contacts are provided by residues 42–46, 92–93, and glutamate 126; these read DAAYD and SL. The active-site N6-AMP-lysine intermediate is the lysine 128. Positions 149, 185, 301, and 325 each coordinate NAD(+). Residues cysteine 430, cysteine 433, cysteine 448, and cysteine 454 each coordinate Zn(2+). Positions 640-719 constitute a BRCT domain; sequence ATGSPVEGKT…DDWFKLVGED (80 aa).

Belongs to the NAD-dependent DNA ligase family. LigA subfamily. It depends on Mg(2+) as a cofactor. Mn(2+) serves as cofactor.

The enzyme catalyses NAD(+) + (deoxyribonucleotide)n-3'-hydroxyl + 5'-phospho-(deoxyribonucleotide)m = (deoxyribonucleotide)n+m + AMP + beta-nicotinamide D-nucleotide.. Functionally, DNA ligase that catalyzes the formation of phosphodiester linkages between 5'-phosphoryl and 3'-hydroxyl groups in double-stranded DNA using NAD as a coenzyme and as the energy source for the reaction. It is essential for DNA replication and repair of damaged DNA. This is DNA ligase from Brucella melitensis biotype 1 (strain ATCC 23456 / CCUG 17765 / NCTC 10094 / 16M).